The following is a 725-amino-acid chain: Eukaryotic elongation factor 2 kinase (725 aa).

The segment covering 1–12 (MADEDLIFRLEG) has biased composition (basic and acidic residues). Residues 1 to 38 (MADEDLIFRLEGVDGGQSPRAGHDGDSDGDSDDEEGYF) form a disordered region. At alanine 2 the chain carries N-acetylalanine. A phosphoserine mark is found at serine 18 and serine 27. Residues 27–36 (SDGDSDDEEG) are compositionally biased toward acidic residues. A phosphoserine; by autocatalysis mark is found at serine 61 and serine 66. Phosphoserine occurs at positions 70, 71, 72, and 74. Serine 78 is modified (phosphoserine; by autocatalysis and TRPM7). The calmodulin-binding stretch occupies residues 81 to 94 (FKEAWKHAIQKAKH). An Alpha-type protein kinase domain is found at 116 to 326 (RYNAVTGEWL…ICESMGLAPF (211 aa)). A Phosphoserine modification is found at serine 243. 296–302 (GDGNLGV) contributes to the ATP binding site. Threonine 348 and threonine 353 each carry phosphothreonine; by autocatalysis. 2 disordered regions span residues 352–405 (GTEE…PHSQ) and 423–477 (SRDH…SLGS). Serine 359 carries the phosphoserine; by MAPK13 and CDK1 modification. Residues 363-377 (RTLSGSRPPLLRPLS) are compositionally biased toward low complexity. The residue at position 366 (serine 366) is a Phosphoserine; by autocatalysis, RPS6KA1 and RPS6KB1. Over residues 386–404 (SDVTFDSLPSSPSSATPHS) the composition is skewed to polar residues. Serine 392 is modified (phosphoserine). Serine 398 bears the Phosphoserine; by AMPK mark. Basic and acidic residues-rich tracts occupy residues 423 to 436 (SRDH…RESE) and 445 to 469 (SEKR…RKYE). Residue serine 435 is modified to Phosphoserine. Serine 445 is subject to Phosphoserine; by autocatalysis. Position 470 is a phosphoserine (serine 470). Residue serine 474 is modified to Phosphoserine; by autocatalysis. Serine 477 is modified (phosphoserine). Residue serine 491 is modified to Phosphoserine; by autocatalysis. Serine 500 bears the Phosphoserine; by PKA mark.

This sequence belongs to the protein kinase superfamily. Alpha-type protein kinase family. Monomer or homodimer. Interacts with Calmodulin/CALM1; this interaction is strictly required for phosphorylation activity. Post-translationally, autophosphorylated at multiple residues, Thr-348 being the major site. Phosphorylated by AMP-activated protein kinase AMPK at Ser-398 leading to EEF2K activation and protein synthesis inhibition. Phosphorylated by TRPM7 at Ser-78 resulting in improved protein stability, higher EE2F phosphorylated and subsequently reduced rate of protein synthesis. Phosphorylation by other kinases such as CDK1 and MAPK13 at Ser-359 or RPS6KA1 and RPS6KB1 at Ser-366 instead decrease EEF2K activity and promote protein synthesis.

The enzyme catalyses [translation elongation factor 2] + ATP = [translation elongation factor 2]-phosphate + ADP + H(+). Its activity is regulated as follows. Undergoes calcium/calmodulin-dependent intramolecular autophosphorylation, and this results in it becoming partially calcium/calmodulin-independent. Threonine kinase that regulates protein synthesis by controlling the rate of peptide chain elongation. Upon activation by a variety of upstream kinases including AMPK or TRPM7, phosphorylates the elongation factor EEF2 at a single site, renders it unable to bind ribosomes and thus inactive. In turn, the rate of protein synthesis is reduced. This Homo sapiens (Human) protein is Eukaryotic elongation factor 2 kinase (EEF2K).